The following is a 447-amino-acid chain: Phosphoglucosamine mutase (447 aa).

Ser104 acts as the Phosphoserine intermediate in catalysis. Ser104, Asp243, Asp245, and Asp247 together coordinate Mg(2+). At Ser104 the chain carries Phosphoserine.

This sequence belongs to the phosphohexose mutase family. Mg(2+) is required as a cofactor. Activated by phosphorylation.

The catalysed reaction is alpha-D-glucosamine 1-phosphate = D-glucosamine 6-phosphate. Catalyzes the conversion of glucosamine-6-phosphate to glucosamine-1-phosphate. The chain is Phosphoglucosamine mutase from Corynebacterium glutamicum (strain R).